Consider the following 222-residue polypeptide: UPF0758 protein YE0063 (222 aa).

The MPN domain maps to 100–222; sequence VLQNPEITQK…CVSFAERGWL (123 aa). Residues histidine 171, histidine 173, and aspartate 184 each coordinate Zn(2+). The JAMM motif motif lies at 171-184; sequence HNHPSGKAEPSQAD.

The protein belongs to the UPF0758 family. YicR subfamily.

The protein is UPF0758 protein YE0063 of Yersinia enterocolitica serotype O:8 / biotype 1B (strain NCTC 13174 / 8081).